A 283-amino-acid chain; its full sequence is 4-diphosphocytidyl-2-C-methyl-D-erythritol kinase (283 aa).

The active site involves K9. An ATP-binding site is contributed by 93–103 (PIAAGLAGGSS). Residue D135 is part of the active site.

It belongs to the GHMP kinase family. IspE subfamily.

It catalyses the reaction 4-CDP-2-C-methyl-D-erythritol + ATP = 4-CDP-2-C-methyl-D-erythritol 2-phosphate + ADP + H(+). Its pathway is isoprenoid biosynthesis; isopentenyl diphosphate biosynthesis via DXP pathway; isopentenyl diphosphate from 1-deoxy-D-xylulose 5-phosphate: step 3/6. Catalyzes the phosphorylation of the position 2 hydroxy group of 4-diphosphocytidyl-2C-methyl-D-erythritol. This Macrococcus caseolyticus (strain JCSC5402) (Macrococcoides caseolyticum) protein is 4-diphosphocytidyl-2-C-methyl-D-erythritol kinase.